The following is a 156-amino-acid chain: Small ribosomal subunit protein uS7 (156 aa).

Belongs to the universal ribosomal protein uS7 family. Part of the 30S ribosomal subunit. Contacts proteins S9 and S11.

Functionally, one of the primary rRNA binding proteins, it binds directly to 16S rRNA where it nucleates assembly of the head domain of the 30S subunit. Is located at the subunit interface close to the decoding center, probably blocks exit of the E-site tRNA. This chain is Small ribosomal subunit protein uS7, found in Lactobacillus helveticus (strain DPC 4571).